Consider the following 563-residue polypeptide: Arginine--tRNA ligase (563 aa).

Positions 121–131 match the 'HIGH' region motif; sequence PNIAKPFSIGH.

It belongs to the class-I aminoacyl-tRNA synthetase family. Monomer.

The protein localises to the cytoplasm. The catalysed reaction is tRNA(Arg) + L-arginine + ATP = L-arginyl-tRNA(Arg) + AMP + diphosphate. This chain is Arginine--tRNA ligase, found in Streptococcus pyogenes serotype M12 (strain MGAS2096).